Here is a 201-residue protein sequence, read N- to C-terminus: MIGCLIGEVFALEAPTVLLNVNGVGYEIDTPLSTFCQLQKGQHVTLWTHLVVREDAQQLYGFIDAQEKLIFRTLLKVNGVGPKMALGILSTLSIELFIHTIEHDDINTLIKVPGVGRKTAERLMIELRDRFKALSVQATTGSTVTSAQIQFSSNSPIAEAEAALQSLGYKPIEAQKAIAAVKADYTEAADLIRAALKSMMK.

The domain I stretch occupies residues 1–63; sequence MIGCLIGEVF…EDAQQLYGFI (63 aa). A domain II region spans residues 64–142; that stretch reads DAQEKLIFRT…ALSVQATTGS (79 aa). Residues 143-152 are flexible linker; that stretch reads TVTSAQIQFS. Positions 152–201 are domain III; that stretch reads SSNSPIAEAEAALQSLGYKPIEAQKAIAAVKADYTEAADLIRAALKSMMK.

The protein belongs to the RuvA family. In terms of assembly, homotetramer. Forms an RuvA(8)-RuvB(12)-Holliday junction (HJ) complex. HJ DNA is sandwiched between 2 RuvA tetramers; dsDNA enters through RuvA and exits via RuvB. An RuvB hexamer assembles on each DNA strand where it exits the tetramer. Each RuvB hexamer is contacted by two RuvA subunits (via domain III) on 2 adjacent RuvB subunits; this complex drives branch migration. In the full resolvosome a probable DNA-RuvA(4)-RuvB(12)-RuvC(2) complex forms which resolves the HJ.

Its subcellular location is the cytoplasm. In terms of biological role, the RuvA-RuvB-RuvC complex processes Holliday junction (HJ) DNA during genetic recombination and DNA repair, while the RuvA-RuvB complex plays an important role in the rescue of blocked DNA replication forks via replication fork reversal (RFR). RuvA specifically binds to HJ cruciform DNA, conferring on it an open structure. The RuvB hexamer acts as an ATP-dependent pump, pulling dsDNA into and through the RuvAB complex. HJ branch migration allows RuvC to scan DNA until it finds its consensus sequence, where it cleaves and resolves the cruciform DNA. In Acinetobacter baylyi (strain ATCC 33305 / BD413 / ADP1), this protein is Holliday junction branch migration complex subunit RuvA.